The sequence spans 206 residues: MAVTKKLILASGSPRRVELLAQAGIEPARLMPMDLDETPKRSEHPRSLARRLSAEKAKAALSAITGDPAWDGSYILAADTVVCVGRRILPKPELVSEASSALHLLSGRSHRVYTGICLVTPDRTLRQKVIDTKVRFKRLSTLDIESYLASGQWRGKAGGYGIQGIAGGFVVKLVGSYTNVVGLPLYETVNLLVGEGYDVHDRWLEG.

The Proton acceptor role is filled by D79.

Belongs to the Maf family. YhdE subfamily. The cofactor is a divalent metal cation.

It localises to the cytoplasm. The enzyme catalyses dTTP + H2O = dTMP + diphosphate + H(+). The catalysed reaction is UTP + H2O = UMP + diphosphate + H(+). Functionally, nucleoside triphosphate pyrophosphatase that hydrolyzes dTTP and UTP. May have a dual role in cell division arrest and in preventing the incorporation of modified nucleotides into cellular nucleic acids. The polypeptide is dTTP/UTP pyrophosphatase (Rhizobium meliloti (strain 1021) (Ensifer meliloti)).